Reading from the N-terminus, the 402-residue chain is Acyl-[acyl-carrier-protein] desaturase 3, chloroplastic (402 aa).

Residues 1 to 32 (MSLTGCLPPRPPCSMRRRTSGGGASVSPVVAM) constitute a chloroplast transit peptide. Residues 1 to 66 (MSLTGCLPPR…EVPPQVTHTL (66 aa)) form a disordered region. Fe cation is bound by residues Glu139, Glu178, His181, Glu231, Glu264, and His267.

Belongs to the fatty acid desaturase type 2 family. In terms of assembly, homodimer. Requires Fe(2+) as cofactor.

The protein localises to the plastid. It localises to the chloroplast. It participates in lipid metabolism; fatty acid metabolism. Introduces a cis double bond in the acyl chain of an acyl-[acyl-carrier protein]. This is Acyl-[acyl-carrier-protein] desaturase 3, chloroplastic from Oryza sativa subsp. japonica (Rice).